Reading from the N-terminus, the 150-residue chain is 3-dehydroquinate dehydratase (150 aa).

The Proton acceptor role is filled by Y26. Residues N77, H83, and D90 each contribute to the substrate site. The active-site Proton donor is H103. Substrate is bound by residues L104–S105 and R114.

Belongs to the type-II 3-dehydroquinase family. As to quaternary structure, homododecamer.

It carries out the reaction 3-dehydroquinate = 3-dehydroshikimate + H2O. It participates in metabolic intermediate biosynthesis; chorismate biosynthesis; chorismate from D-erythrose 4-phosphate and phosphoenolpyruvate: step 3/7. Its function is as follows. Catalyzes a trans-dehydration via an enolate intermediate. The chain is 3-dehydroquinate dehydratase from Yersinia enterocolitica serotype O:8 / biotype 1B (strain NCTC 13174 / 8081).